The sequence spans 243 residues: Uridylate kinase (243 aa).

Residue 15–18 (KMSG) coordinates ATP. Glycine 57 serves as a coordination point for UMP. The ATP site is built by glycine 58 and arginine 62. Residues aspartate 77 and 138–145 (TGNPLVTT) each bind UMP. Positions 165, 166, 171, and 174 each coordinate ATP.

The protein belongs to the UMP kinase family. Homohexamer.

It is found in the cytoplasm. It carries out the reaction UMP + ATP = UDP + ADP. The protein operates within pyrimidine metabolism; CTP biosynthesis via de novo pathway; UDP from UMP (UMPK route): step 1/1. Its activity is regulated as follows. Inhibited by UTP. Its function is as follows. Catalyzes the reversible phosphorylation of UMP to UDP. The chain is Uridylate kinase from Coxiella burnetii (strain RSA 493 / Nine Mile phase I).